Here is a 300-residue protein sequence, read N- to C-terminus: Ribosomal protein bS6--L-glutamate ligase (300 aa).

Residues 104-287 enclose the ATP-grasp domain; sequence MQLLARQGID…IAGKMIRWIE (184 aa). ATP-binding positions include Lys-141, 178 to 179, Asp-187, and 211 to 213; these read EY and RSN. Residues Asp-248, Glu-260, and Asn-262 each contribute to the Mg(2+) site. The Mn(2+) site is built by Asp-248, Glu-260, and Asn-262.

Belongs to the RimK family. Requires Mg(2+) as cofactor. It depends on Mn(2+) as a cofactor.

Functionally, an L-glutamate ligase that catalyzes the ATP-dependent post-translational addition of glutamate residues to the C-terminus of ribosomal protein bS6 (RpsF). Is also able to catalyze the synthesis of poly-alpha-glutamate in vitro, via ATP hydrolysis from unprotected glutamate as substrate. The number of glutamate residues added to either RpsF or to poly-alpha-glutamate changes with pH. The chain is Ribosomal protein bS6--L-glutamate ligase from Shigella flexneri serotype 5b (strain 8401).